The sequence spans 217 residues: Deoxyribose-phosphate aldolase (217 aa).

D95 functions as the Proton donor/acceptor in the catalytic mechanism. K156 acts as the Schiff-base intermediate with acetaldehyde in catalysis. The Proton donor/acceptor role is filled by K184.

The protein belongs to the DeoC/FbaB aldolase family. DeoC type 1 subfamily.

The protein localises to the cytoplasm. The enzyme catalyses 2-deoxy-D-ribose 5-phosphate = D-glyceraldehyde 3-phosphate + acetaldehyde. It functions in the pathway carbohydrate degradation; 2-deoxy-D-ribose 1-phosphate degradation; D-glyceraldehyde 3-phosphate and acetaldehyde from 2-deoxy-alpha-D-ribose 1-phosphate: step 2/2. Catalyzes a reversible aldol reaction between acetaldehyde and D-glyceraldehyde 3-phosphate to generate 2-deoxy-D-ribose 5-phosphate. This chain is Deoxyribose-phosphate aldolase, found in Thermosynechococcus vestitus (strain NIES-2133 / IAM M-273 / BP-1).